Reading from the N-terminus, the 1029-residue chain is Error-prone DNA polymerase (1029 aa).

Belongs to the DNA polymerase type-C family. DnaE2 subfamily.

It is found in the cytoplasm. The enzyme catalyses DNA(n) + a 2'-deoxyribonucleoside 5'-triphosphate = DNA(n+1) + diphosphate. DNA polymerase involved in damage-induced mutagenesis and translesion synthesis (TLS). It is not the major replicative DNA polymerase. This chain is Error-prone DNA polymerase, found in Saccharophagus degradans (strain 2-40 / ATCC 43961 / DSM 17024).